The chain runs to 267 residues: MADRRNLFFFYGDDKAKLVEKMKPIYRILEENGFTILDHPKNANAIVSVGDDATFLQAVRKTGFREDCLYAGISTKDEISFYCDFHIDHVDTALQEITKNEIEVRKYPTIEVDVDGSTSFHCLNEFSLRSSIIKTFVVDVHVDDLYFETFRGDGLVVSTPTGSTAYNKSLRGAVVDPLIPCFQVSELASLNNNTYRTLGSPFILNHERTLTLKLRPDGNDYPVIGMDNEALSIKQVEKAVVRLSDKQIKTVKLKNNSFWEKVQRTFL.

Catalysis depends on aspartate 52, which acts as the Proton acceptor. NAD(+) contacts are provided by residues 52 to 53, 124 to 125, arginine 151, aspartate 153, 164 to 169, and alanine 188; these read DA, NE, and TAYNKS.

It belongs to the NAD kinase family. The cofactor is a divalent metal cation.

The protein localises to the cytoplasm. The catalysed reaction is NAD(+) + ATP = ADP + NADP(+) + H(+). In terms of biological role, involved in the regulation of the intracellular balance of NAD and NADP, and is a key enzyme in the biosynthesis of NADP. Catalyzes specifically the phosphorylation on 2'-hydroxyl of the adenosine moiety of NAD to yield NADP. The protein is NAD kinase 2 of Bacillus anthracis.